An 842-amino-acid chain; its full sequence is Non-motile and phage-resistance protein (842 aa).

3 consecutive transmembrane segments (helical) span residues 29–50 (VFVRIAILAALLLLAVYTAFGV), 283–303 (GAFSLLVPLGVGIALALLLMI), and 343–363 (VYLSDVTGAMFGWGGGGVVSG). In terms of domain architecture, PAS spans 318-389 (SERRFRLAVE…QALANAAMYG (72 aa)). Residues 607–830 (NMSHELRTPL…TVSFTLPVRH (224 aa)) form the Histidine kinase domain. Phosphohistidine; by autocatalysis is present on His-610.

The protein resides in the cell membrane. It catalyses the reaction ATP + protein L-histidine = ADP + protein N-phospho-L-histidine.. Its function is as follows. Member of the two-component regulatory system involved in the regulation of polar organelle development. PleC functions as a membrane-associated protein kinase that transfers phosphate to the response regulator PleD, leading to its activation. The polypeptide is Non-motile and phage-resistance protein (pleC) (Caulobacter vibrioides (strain ATCC 19089 / CIP 103742 / CB 15) (Caulobacter crescentus)).